The chain runs to 121 residues: MPKKDVRAFLYDILENMKDIIDFTNDMTFDEFLKDKKTQKAVIRSLEVIGEAVKNLPEDFINKYPQVPWKGMARLRDKLIHHYFGINYEIIWDIVINKVPNDIKEIEEIIKDIEGEDENSI.

Catalysis depends on residues arginine 76 and histidine 81. The short motif at arginine 76–tyrosine 83 is the RX(4)HXY motif element. Tyrosine 83 is modified (O-di-AMP-tyrosine).

Belongs to the HepT RNase toxin family. As to quaternary structure, homodimer, probably forms a complex with cognate antitoxin MJ0128. Post-translationally, modified by cognate antitoxin MJ0128; probably at least 2 successive AMPylation events occur on Tyr-83.

Its function is as follows. Probable toxic component of a putative type VII toxin-antitoxin (TA) system, probably an RNase. Probably neutralized by cognate antitoxin MJ0128. Neutralization may be due to AMPylation by MJ0128. In Methanocaldococcus jannaschii (strain ATCC 43067 / DSM 2661 / JAL-1 / JCM 10045 / NBRC 100440) (Methanococcus jannaschii), this protein is Putative RNase MJ0127.